The primary structure comprises 180 residues: Protein C2-DOMAIN ABA-RELATED 10 (180 aa).

In terms of domain architecture, C2 spans 1–105; sequence MDQKPLGLLT…EALKMGMELL (105 aa). The Ca(2+) site is built by Arg-22, Asp-23, Asp-28, Asp-74, Trp-75, Asp-76, and Asp-82.

This sequence belongs to the plant CAR protein family. Binds to PYR/PYL/RCAR abscisic acid intracellular receptors in an ABA-independent manner, both at the plasma membrane and in the nucleus.

It localises to the cell membrane. It is found in the nucleus. Functionally, stimulates the GTPase/ATPase activities of Obg-like ATPases. Mediates the transient calcium-dependent interaction of PYR/PYL/RCAR abscisic acid (ABA) receptors with the plasma membrane and thus regulates ABA sensitivity. The protein is Protein C2-DOMAIN ABA-RELATED 10 of Arabidopsis thaliana (Mouse-ear cress).